A 344-amino-acid polypeptide reads, in one-letter code: Glycerol-3-phosphate dehydrogenase [NAD(P)+] (344 aa).

NADPH is bound by residues Trp-11, Arg-31, Arg-32, and Lys-105. Positions 105, 133, and 135 each coordinate sn-glycerol 3-phosphate. Ala-137 contacts NADPH. Positions 188, 241, 251, 252, and 253 each coordinate sn-glycerol 3-phosphate. The Proton acceptor role is filled by Lys-188. An NADPH-binding site is contributed by Arg-252. Glu-278 contacts NADPH.

The protein belongs to the NAD-dependent glycerol-3-phosphate dehydrogenase family.

It localises to the cytoplasm. The enzyme catalyses sn-glycerol 3-phosphate + NAD(+) = dihydroxyacetone phosphate + NADH + H(+). The catalysed reaction is sn-glycerol 3-phosphate + NADP(+) = dihydroxyacetone phosphate + NADPH + H(+). It functions in the pathway membrane lipid metabolism; glycerophospholipid metabolism. Functionally, catalyzes the reduction of the glycolytic intermediate dihydroxyacetone phosphate (DHAP) to sn-glycerol 3-phosphate (G3P), the key precursor for phospholipid synthesis. This chain is Glycerol-3-phosphate dehydrogenase [NAD(P)+], found in Acidithiobacillus ferrooxidans (strain ATCC 23270 / DSM 14882 / CIP 104768 / NCIMB 8455) (Ferrobacillus ferrooxidans (strain ATCC 23270)).